Consider the following 126-residue polypeptide: Thioredoxin-like 3-3 (126 aa).

The disordered stretch occupies residues 1–24; the sequence is MRKQESEGANLEFESKSNDNGNVK. Residues 5 to 126 enclose the Thioredoxin domain; it reads ESEGANLEFE…RLHDRLWLHS (122 aa). Active-site nucleophile residues include Cys55 and Cys58. Cys55 and Cys58 are disulfide-bonded.

Belongs to the thioredoxin family.

In terms of biological role, probable thiol-disulfide oxidoreductase that may participate in various redox reactions. The polypeptide is Thioredoxin-like 3-3 (Arabidopsis thaliana (Mouse-ear cress)).